Reading from the N-terminus, the 69-residue chain is Pleurain-A1 (69 aa).

The signal sequence occupies residues 1–18 (MFTLKKTLLLLFFLGTIS). Positions 19–43 (ISLCKQERDADEDDGRKMTEEEVKR) are excised as a propeptide. Cysteine 63 and cysteine 69 form a disulfide bridge.

Expressed by the skin glands.

The protein localises to the secreted. Functionally, antimicrobial peptide. Has activity against the Gram-positive bacterium S.aureus ATCC2592 (MIC=15 ug/ml), the Gram-negative bacteria E.coli ATCC25922 (MIC=60 ug/ml), B.dysenteriae (MIC=120 ug/ml), H.pylori NTCT11637 (MIC=30 ug/ml), and the fungus C.albicans ATCC2002 (MIC=30 ug/ml). Has little hemolytic activity on rabbit red blood cells. This Nidirana pleuraden (Yunnan pond frog) protein is Pleurain-A1.